Consider the following 265-residue polypeptide: 4-hydroxy-tetrahydrodipicolinate reductase (265 aa).

NAD(+)-binding positions include 7 to 12 (GASGRM) and Asp33. Arg34 is an NADP(+) binding site. NAD(+) is bound by residues 96–98 (GTT) and 120–123 (AANM). His153 functions as the Proton donor/acceptor in the catalytic mechanism. His154 is a (S)-2,3,4,5-tetrahydrodipicolinate binding site. Lys157 serves as the catalytic Proton donor. Residue 163–164 (GT) participates in (S)-2,3,4,5-tetrahydrodipicolinate binding.

This sequence belongs to the DapB family.

The protein resides in the cytoplasm. It catalyses the reaction (S)-2,3,4,5-tetrahydrodipicolinate + NAD(+) + H2O = (2S,4S)-4-hydroxy-2,3,4,5-tetrahydrodipicolinate + NADH + H(+). It carries out the reaction (S)-2,3,4,5-tetrahydrodipicolinate + NADP(+) + H2O = (2S,4S)-4-hydroxy-2,3,4,5-tetrahydrodipicolinate + NADPH + H(+). It participates in amino-acid biosynthesis; L-lysine biosynthesis via DAP pathway; (S)-tetrahydrodipicolinate from L-aspartate: step 4/4. Its function is as follows. Catalyzes the conversion of 4-hydroxy-tetrahydrodipicolinate (HTPA) to tetrahydrodipicolinate. The chain is 4-hydroxy-tetrahydrodipicolinate reductase from Burkholderia orbicola (strain MC0-3).